A 300-amino-acid polypeptide reads, in one-letter code: Putative S-adenosyl-L-methionine-dependent methyltransferase Mkms_0379 (300 aa).

Residues D128 and 157–158 (DL) each bind S-adenosyl-L-methionine.

This sequence belongs to the UPF0677 family.

Its function is as follows. Exhibits S-adenosyl-L-methionine-dependent methyltransferase activity. This is Putative S-adenosyl-L-methionine-dependent methyltransferase Mkms_0379 from Mycobacterium sp. (strain KMS).